The sequence spans 183 residues: Regulatory protein RecX (183 aa).

The span at 1 to 12 shows a compositional bias: polar residues; the sequence is MTSFPHPSTSES. Positions 1 to 26 are disordered; sequence MTSFPHPSTSESGPDPDSEPNREEQA.

Belongs to the RecX family.

Its subcellular location is the cytoplasm. Modulates RecA activity. The sequence is that of Regulatory protein RecX from Mycobacterium sp. (strain KMS).